Consider the following 86-residue polypeptide: Large ribosomal subunit protein uL23 (86 aa).

This sequence belongs to the universal ribosomal protein uL23 family. As to quaternary structure, part of the 50S ribosomal subunit. Contacts protein L29.

Its function is as follows. Binds to 23S rRNA. One of the proteins that surrounds the polypeptide exit tunnel on the outside of the ribosome. The sequence is that of Large ribosomal subunit protein uL23 from Methanococcus vannielii (strain ATCC 35089 / DSM 1224 / JCM 13029 / OCM 148 / SB).